The chain runs to 154 residues: UPF0225 protein YpsIP31758_1970 (154 aa).

The protein belongs to the UPF0225 family.

This Yersinia pseudotuberculosis serotype O:1b (strain IP 31758) protein is UPF0225 protein YpsIP31758_1970.